Consider the following 98-residue polypeptide: NADH-ubiquinone oxidoreductase chain 4L (98 aa).

A run of 3 helical transmembrane segments spans residues 1–21, 29–49, and 61–81; these read MTMV…GLLM, SLLC…VTIL, and IILL…LVMV.

The protein belongs to the complex I subunit 4L family. As to quaternary structure, core subunit of respiratory chain NADH dehydrogenase (Complex I) which is composed of 45 different subunits.

The protein resides in the mitochondrion inner membrane. It carries out the reaction a ubiquinone + NADH + 5 H(+)(in) = a ubiquinol + NAD(+) + 4 H(+)(out). In terms of biological role, core subunit of the mitochondrial membrane respiratory chain NADH dehydrogenase (Complex I) which catalyzes electron transfer from NADH through the respiratory chain, using ubiquinone as an electron acceptor. Part of the enzyme membrane arm which is embedded in the lipid bilayer and involved in proton translocation. The polypeptide is NADH-ubiquinone oxidoreductase chain 4L (MT-ND4L) (Leptonychotes weddellii (Weddell seal)).